Reading from the N-terminus, the 273-residue chain is Large ribosomal subunit protein uL2c (273 aa).

Disordered regions lie at residues E30–G55 and G222–R243. Positions N45 to G55 are enriched in basic residues.

The protein belongs to the universal ribosomal protein uL2 family. Part of the 50S ribosomal subunit.

The protein resides in the plastid. The sequence is that of Large ribosomal subunit protein uL2c (rpl2) from Prototheca wickerhamii.